Reading from the N-terminus, the 115-residue chain is NADH-ubiquinone oxidoreductase chain 3 (115 aa).

3 consecutive transmembrane segments (helical) span residues 3–23 (LFVALFINASLSFILISVAFW), 55–75 (FFLVAITFLLFDLEIALLLPL), and 84–104 (LSAMMITSFILISILALGLIY).

This sequence belongs to the complex I subunit 3 family. As to quaternary structure, core subunit of respiratory chain NADH dehydrogenase (Complex I) which is composed of 45 different subunits. Interacts with TMEM186. Interacts with TMEM242.

It localises to the mitochondrion inner membrane. It carries out the reaction a ubiquinone + NADH + 5 H(+)(in) = a ubiquinol + NAD(+) + 4 H(+)(out). Functionally, core subunit of the mitochondrial membrane respiratory chain NADH dehydrogenase (Complex I) which catalyzes electron transfer from NADH through the respiratory chain, using ubiquinone as an electron acceptor. Essential for the catalytic activity of complex I. This is NADH-ubiquinone oxidoreductase chain 3 from Sigmodon hispidus (Hispid cotton rat).